A 178-amino-acid chain; its full sequence is Caveolin-1 (178 aa).

Serine 2 carries the N-acetylserine modification. Serine 2 is subject to Phosphoserine. The segment at 2–94 (SGGKYVDSEG…WKASFTTFTV (93 aa)) is required for homooligomerization. The Cytoplasmic segment spans residues 2-104 (SGGKYVDSEG…TKYWFYRLLS (103 aa)). An N6-acetyllysine; alternate modification is found at lysine 5. Residue lysine 5 forms a Glycyl lysine isopeptide (Lys-Gly) (interchain with G-Cter in ubiquitin); alternate linkage. Position 6 is a phosphotyrosine (tyrosine 6). Serine 9 is modified (phosphoserine). At tyrosine 14 the chain carries Phosphotyrosine; by ABL1. Residue tyrosine 25 is modified to Phosphotyrosine. Glycyl lysine isopeptide (Lys-Gly) (interchain with G-Cter in ubiquitin) cross-links involve residues lysine 26, lysine 30, lysine 39, lysine 47, and lysine 57. The interval 82–94 (DGIWKASFTTFTV) is interaction with CAVIN3. The helical intramembrane region spans 105–125 (ALFGIPMALIWGIYFAILSFL). The Cytoplasmic portion of the chain corresponds to 126 to 178 (HIWAVVPCIKSFLIEIQCISRVYSIYVHTFCDPFFEAVGKIFSNIRINMQKEI). Residues 131–142 (VPCIKSFLIEIQ) are interacts with SPRY1, SPRY2, SPRY3 and SPRY4. Residues cysteine 133, cysteine 143, and cysteine 156 are each lipidated (S-palmitoyl cysteine). An interacts with SPRY1, SPRY2, and SPRY4 region spans residues 149–160 (SIYVHTFCDPFF). The interacts with SPRY1, SPRY2, SPRY3 and SPRY4 stretch occupies residues 167–178 (FSNIRINMQKEI).

The protein belongs to the caveolin family. Homooligomer. Interacts with GLIPR2. Interacts with NOSTRIN. Interacts with SNAP25 and STX1A. Interacts (via the N-terminus) with DPP4; the interaction is direct. Interacts with CTNNB1, CDH1 and JUP. Interacts with PACSIN2; this interaction induces membrane tubulation. Interacts with SLC7A9. Interacts with BMX and BTK. Interacts with TGFBR1. Interacts with CAVIN3 (via leucine-zipper domain) in a cholesterol-sensitive manner. Interacts with CAVIN1. Interacts with EHD2 in a cholesterol-dependent manner. Forms a ternary complex with UBXN6 and VCP; mediates CAV1 targeting to lysosomes for degradation. Interacts with ABCG1; this interaction regulates ABCG1-mediated cholesterol efflux. Interacts with NEU3; this interaction enhances NEU3 sialidase activity within caveola. Interacts (via C-terminus) with SPRY1, SPRY2 (via C-terminus), SPRY3, and SPRY4. Interacts with IGFBP5; this interaction allows trafficking of IGFBP5 from the plasma membrane to the nucleus. Post-translationally, phosphorylated at Tyr-14 by ABL1 in response to oxidative stress. Ubiquitinated. Undergo monoubiquitination and multi- and/or polyubiquitination. Monoubiquitination of N-terminal lysines promotes integration in a ternary complex with UBXN6 and VCP which promotes oligomeric CAV1 targeting to lysosomes for degradation. Ubiquitinated by ZNRF1; leading to degradation and modulation of the TLR4-mediated immune response.

The protein resides in the golgi apparatus membrane. It is found in the cell membrane. The protein localises to the membrane. Its subcellular location is the caveola. It localises to the membrane raft. May act as a scaffolding protein within caveolar membranes. Forms a stable heterooligomeric complex with CAV2 that targets to lipid rafts and drives caveolae formation. Mediates the recruitment of CAVIN proteins (CAVIN1/2/3/4) to the caveolae. Interacts directly with G-protein alpha subunits and can functionally regulate their activity. Involved in the costimulatory signal essential for T-cell receptor (TCR)-mediated T-cell activation. Its binding to DPP4 induces T-cell proliferation and NF-kappa-B activation in a T-cell receptor/CD3-dependent manner. Recruits CTNNB1 to caveolar membranes and may regulate CTNNB1-mediated signaling through the Wnt pathway. Negatively regulates TGFB1-mediated activation of SMAD2/3 by mediating the internalization of TGFBR1 from membrane rafts leading to its subsequent degradation. Binds 20(S)-hydroxycholesterol (20(S)-OHC). The polypeptide is Caveolin-1 (CAV1) (Felis catus (Cat)).